Here is a 2841-residue protein sequence, read N- to C-terminus: Neurofibromin (2841 aa).

A2 is modified (N-acetylalanine). A phosphoserine mark is found at S866 and S878. One can recognise a Ras-GAP domain in the interval 1253–1484; it reads HLLYQLLWNM…DLARRFFLDI (232 aa). One can recognise a CRAL-TRIO domain in the interval 1582–1740; sequence EKEEFKALKT…ATLALEEDLK (159 aa). The interval 1582-1839 is lipid binding; it reads EKEEFKALKT…RTRWELSQPD (258 aa). A phosphoserine mark is found at S2190 and S2469. A Phosphothreonine modification is found at T2516. Residues S2517, S2523, S2525, and S2545 each carry the phosphoserine modification. The Bipartite nuclear localization signal motif lies at 2557-2573; the sequence is KRQEMESGITTPPKMRR. T2567 carries the post-translational modification Phosphothreonine. Residues S2599, S2804, and S2819 each carry the phosphoserine modification. Residues 2786–2841 form a disordered region; sequence SLATSQHSPGLDKENVELSPTAGHCNSGRTRHGSASQVQKQRSAGSFKRNSIKKIV. Over residues 2818–2829 the composition is skewed to polar residues; sequence GSASQVQKQRSA.

In terms of assembly, interacts with HTR6. Interacts with SPRED2. Post-translationally, ubiquitinated by RNF7/RBX2, leading to its degradation. As to expression, expressed predominantly in brain, spinal cord and testis. In terms of tissue distribution, expressed predominantly in adrenal gland, kidney, ovary and lung. Widely and more weakly expressed. Predominantly expressed in adrenal gland. As to expression, widely and more weakly expressed. Expressed mainly in testis.

Its subcellular location is the nucleus. It is found in the nucleolus. The protein resides in the cell membrane. Functionally, stimulates the GTPase activity of Ras. NF1 shows greater affinity for Ras GAP, but lower specific activity. May be a regulator of Ras activity. In Mus musculus (Mouse), this protein is Neurofibromin (Nf1).